The chain runs to 727 residues: ADP-ribosylation factor-binding protein GGA3 (727 aa).

The VHS domain occupies 16–146 (ATNPSNRQED…MLKRQGIVQS (131 aa)). Phosphoserine is present on residues S159 and S275. One can recognise a GAT domain in the interval 171–298 (DEEKSKLLAK…VINSYKTIIE (128 aa)). A unstructured hinge region spans residues 299-597 (GQIINGEVTT…VHVPLESIKP (299 aa)). The tract at residues 334–385 (TPSSSSPVLAPAPAPPTSGIPILPPPPQTSGPPRSRSSSQAEAPSGPDSTNN) is disordered. The span at 343–363 (APAPAPPTSGIPILPPPPQTS) shows a compositional bias: pro residues. A compositionally biased stretch (low complexity) spans 364-374 (GPPRSRSSSQA). The DXXLL signature appears at 391–395 (DEELL). The disordered stretch occupies residues 400 to 419 (SDPAPTAPKESAGNSPWHLF). In terms of domain architecture, GAE spans 598 to 719 (SSALPVTAYD…TELGEVDQFP (122 aa)).

This sequence belongs to the GGA protein family. In terms of assembly, monomer. Interacts with GGA1 and GGA2. Binds to clathrin and activated ARFs, such as ARF1, ARF5 and ARF6. Binds RABEP1 and RABGEF1. Interacts with the membrane proteins M6PR/CD-MPR and IGF2R/CI-MPR and the accessory proteins SYNRG, EPN4, NECAP1, NECAP2 and AFTPH/aftiphilin. Interacts with TSG101 and UBC. Interacts with ADRA2B. Interacts with NTRK1; the interaction is independent of NTRK1 activation and ubiquitination. Interacts (via VHS domain) with BACE1 (via DXXLL motif). In terms of processing, phosphorylated by CK2 and dephosphorylated by PP2A. Phosphorylation of GGA3 allows the internal DXXLL motif to bind the VHS domain and to inhibit the recognition of cargo signals. Ubiquitinated. Post-translationally, proteolytically cleaved during apoptosis by CASP3.

The protein resides in the golgi apparatus. It localises to the trans-Golgi network membrane. Its subcellular location is the endosome membrane. The protein localises to the early endosome membrane. It is found in the recycling endosome membrane. Its function is as follows. Plays a role in protein sorting and trafficking between the trans-Golgi network (TGN) and endosomes. Mediates the ARF-dependent recruitment of clathrin to the TGN and binds ubiquitinated proteins and membrane cargo molecules with a cytosolic acidic cluster-dileucine (DXXLL) motif. Mediates export of the GPCR receptor ADRA2B to the cell surface. Involved in BACE1 transport and sorting as well as regulation of BACE1 protein levels. Regulates retrograde transport of BACE1 from endosomes to the trans-Golgi network via interaction through the VHS motif and dependent of BACE1 phosphorylation. Modulates BACE1 protein levels independently of the interaction between VHS domain and DXXLL motif through recognition of ubiquitination. Key player in a novel DXXLL-mediated endosomal sorting machinery to the recycling pathway that targets NTRK1 to the plasma membrane. This is ADP-ribosylation factor-binding protein GGA3 from Rattus norvegicus (Rat).